The following is a 247-amino-acid chain: Adenosylcobinamide-GDP ribazoletransferase (247 aa).

A run of 5 helical transmembrane segments spans residues 34 to 54 (IVMF…IFIL), 59 to 79 (CGIP…TGGF), 113 to 133 (GGLA…ELAL), 138 to 158 (MLAA…LLMY), and 187 to 207 (LAVI…AMVV).

It belongs to the CobS family. Requires Mg(2+) as cofactor.

It is found in the cell inner membrane. It catalyses the reaction alpha-ribazole + adenosylcob(III)inamide-GDP = adenosylcob(III)alamin + GMP + H(+). It carries out the reaction alpha-ribazole 5'-phosphate + adenosylcob(III)inamide-GDP = adenosylcob(III)alamin 5'-phosphate + GMP + H(+). It participates in cofactor biosynthesis; adenosylcobalamin biosynthesis; adenosylcobalamin from cob(II)yrinate a,c-diamide: step 7/7. Joins adenosylcobinamide-GDP and alpha-ribazole to generate adenosylcobalamin (Ado-cobalamin). Also synthesizes adenosylcobalamin 5'-phosphate from adenosylcobinamide-GDP and alpha-ribazole 5'-phosphate. In Salmonella dublin (strain CT_02021853), this protein is Adenosylcobinamide-GDP ribazoletransferase.